We begin with the raw amino-acid sequence, 286 residues long: uncharacterized protein (286 aa).

The 220-residue stretch at 2–221 (VDGMKHLILK…PIYIKNLQKR (220 aa)) folds into the Radical SAM core domain. [4Fe-4S] cluster-binding residues include cysteine 16, cysteine 20, and cysteine 23.

It belongs to the radical SAM superfamily. Anaerobic sulfatase-maturating enzyme family. It depends on [4Fe-4S] cluster as a cofactor.

This is an uncharacterized protein from Methanocaldococcus jannaschii (strain ATCC 43067 / DSM 2661 / JAL-1 / JCM 10045 / NBRC 100440) (Methanococcus jannaschii).